The sequence spans 182 residues: Bifunctional protein PyrR (182 aa).

A PRPP-binding motif is present at residues 99–111 (VVLVDDVLFTGRT).

It belongs to the purine/pyrimidine phosphoribosyltransferase family. PyrR subfamily.

The enzyme catalyses UMP + diphosphate = 5-phospho-alpha-D-ribose 1-diphosphate + uracil. In terms of biological role, regulates the transcription of the pyrimidine nucleotide (pyr) operon in response to exogenous pyrimidines. Also displays a weak uracil phosphoribosyltransferase activity which is not physiologically significant. This is Bifunctional protein PyrR from Chloroflexus aurantiacus (strain ATCC 29366 / DSM 635 / J-10-fl).